Reading from the N-terminus, the 352-residue chain is MELTELLLVVMLLLTARLDPCLPAPPACDPRLLNKMLRDSHVLHSRLSQCPDIYPLSTPVLLPAVDFSLGEWKTQKEQTKAQDVWGAVALLLDGVLAARGQLGPSCLSSLLGQLSGQVRLLLGALQGLLGTQLPPQGRTTTHKDPNAIFLSFQQLLRGKVRFLLLVAGPTLCAKQSQPTTAVPTNTSLFLTLRKLPNRTSGLLETNSSISARTTGSGLLKRLQGFRAKIPGLLNQTSRSLNQTPGHLSRTHGPLNGTHGLLPGLSLTALGAPDIPPGTSDMDALPPNLWPRYSPSPIHPPPGQYTLFSPLPTSPTPQNPLQPPPPDPSATANSTSPLLIAAHPHFQNLSQEE.

A signal peptide spans 1–23 (MELTELLLVVMLLLTARLDPCLP). 2 disulfides stabilise this stretch: cysteine 28–cysteine 172 and cysteine 50–cysteine 106. Residues asparagine 185, asparagine 197, asparagine 206, asparagine 234, and asparagine 255 are each glycosylated (N-linked (GlcNAc...) asparagine). A compositionally biased stretch (polar residues) spans 233-245 (LNQTSRSLNQTPG). Disordered stretches follow at residues 233-259 (LNQT…GTHG) and 292-352 (YSPS…SQEE). Positions 311–327 (PTSPTPQNPLQPPPPDP) are enriched in pro residues. N-linked (GlcNAc...) asparagine glycans are attached at residues asparagine 332 and asparagine 347.

Belongs to the EPO/TPO family.

The protein resides in the secreted. Lineage-specific cytokine affecting the proliferation and maturation of megakaryocytes from their committed progenitor cells. It acts at a late stage of megakaryocyte development. It may be the major physiological regulator of circulating platelets. This Canis lupus familiaris (Dog) protein is Thrombopoietin (THPO).